The chain runs to 164 residues: C-phycoerythrin alpha chain (164 aa).

Residues cysteine 82 and cysteine 139 each coordinate (2R,3E)-phycoerythrobilin.

Belongs to the phycobiliprotein family. In terms of assembly, heterodimer of an alpha and a beta chain. In terms of processing, contains two covalently linked bilin chromophores.

Its subcellular location is the cellular thylakoid membrane. In terms of biological role, light-harvesting photosynthetic bile pigment-protein from the phycobiliprotein complex. The chain is C-phycoerythrin alpha chain (cpeA) from Synechocystis sp. (strain PCC 6701).